Reading from the N-terminus, the 172-residue chain is Peptidyl-tRNA hydrolase (172 aa).

TRNA is bound at residue tyrosine 10. Histidine 15 (proton acceptor) is an active-site residue. TRNA contacts are provided by phenylalanine 59, asparagine 61, and asparagine 101.

Belongs to the PTH family. As to quaternary structure, monomer.

Its subcellular location is the cytoplasm. It carries out the reaction an N-acyl-L-alpha-aminoacyl-tRNA + H2O = an N-acyl-L-amino acid + a tRNA + H(+). Hydrolyzes ribosome-free peptidyl-tRNAs (with 1 or more amino acids incorporated), which drop off the ribosome during protein synthesis, or as a result of ribosome stalling. Its function is as follows. Catalyzes the release of premature peptidyl moieties from peptidyl-tRNA molecules trapped in stalled 50S ribosomal subunits, and thus maintains levels of free tRNAs and 50S ribosomes. This Rubrobacter xylanophilus (strain DSM 9941 / JCM 11954 / NBRC 16129 / PRD-1) protein is Peptidyl-tRNA hydrolase.